Here is a 68-residue protein sequence, read N- to C-terminus: Antimicrobial peptide Eval418 (68 aa).

The first 23 residues, 1-23 (MRTQLAVLLVALVLLQMIAQSEA), serve as a signal peptide directing secretion. Ile-36 is modified (isoleucine amide). A propeptide spanning residues 37–68 (GKRGLRNLDDLDDVFDDDLSAADLEFLKQLMR) is cleaved from the precursor.

This sequence belongs to the non-disulfide-bridged peptide (NDBP) superfamily. Short antimicrobial peptide (group 4) family. As to expression, expressed by the venom gland.

The protein localises to the secreted. Probable antimicrobial peptide. Shows dose-dependent and time-dependent inactivation of herpes simplex virus type 1 (HSV-1) and dose-dependent inhibition of HSV-1 viral attachment to host cells. Scarcely suppress an established HSV-1 infection due to poor cellular uptake. The protein is Antimicrobial peptide Eval418 of Euscorpiops validus (Scorpion).